Reading from the N-terminus, the 262-residue chain is tRNA (guanine-N(7)-)-methyltransferase (262 aa).

The disordered stretch occupies residues 1–58 (MLPQDTNTDPLPGDDAESASGKSADASQGTPNPGDEVAHPRRIRSFVRRAGRTSTGQQ). Residues 40-51 (PRRIRSFVRRAG) show a composition bias toward basic residues. S-adenosyl-L-methionine contacts are provided by Glu92, Glu117, Asp144, and Asp167. The active site involves Asp167. Lys171 provides a ligand contact to substrate. The interval 173 to 178 (RHNKRR) is interaction with RNA. Residues Asp203 and 241–244 (TKFE) contribute to the substrate site.

The protein belongs to the class I-like SAM-binding methyltransferase superfamily. TrmB family.

The enzyme catalyses guanosine(46) in tRNA + S-adenosyl-L-methionine = N(7)-methylguanosine(46) in tRNA + S-adenosyl-L-homocysteine. It participates in tRNA modification; N(7)-methylguanine-tRNA biosynthesis. In terms of biological role, catalyzes the formation of N(7)-methylguanine at position 46 (m7G46) in tRNA. The chain is tRNA (guanine-N(7)-)-methyltransferase from Cupriavidus metallidurans (strain ATCC 43123 / DSM 2839 / NBRC 102507 / CH34) (Ralstonia metallidurans).